Here is a 393-residue protein sequence, read N- to C-terminus: S-adenosylmethionine synthase (393 aa).

H16 is an ATP binding site. D18 contacts Mg(2+). E44 is a K(+) binding site. Residues E57 and Q100 each coordinate L-methionine. The interval 100-110 is flexible loop; it reads QSNDIAQGVDH. Residues 167-169, 238-239, D247, 253-254, A270, and K274 each bind ATP; these read DAK, RF, and RK. D247 provides a ligand contact to L-methionine. K278 contacts L-methionine.

The protein belongs to the AdoMet synthase family. Homotetramer; dimer of dimers. Mg(2+) serves as cofactor. K(+) is required as a cofactor.

The protein localises to the cytoplasm. It carries out the reaction L-methionine + ATP + H2O = S-adenosyl-L-methionine + phosphate + diphosphate. It functions in the pathway amino-acid biosynthesis; S-adenosyl-L-methionine biosynthesis; S-adenosyl-L-methionine from L-methionine: step 1/1. Functionally, catalyzes the formation of S-adenosylmethionine (AdoMet) from methionine and ATP. The overall synthetic reaction is composed of two sequential steps, AdoMet formation and the subsequent tripolyphosphate hydrolysis which occurs prior to release of AdoMet from the enzyme. In Polaromonas sp. (strain JS666 / ATCC BAA-500), this protein is S-adenosylmethionine synthase.